The sequence spans 173 residues: Acireductone dioxygenase (173 aa).

Residues 1 to 21 (MKFYYHDNDSSVDQCAPHDSG) form a disordered region. The Fe(2+) site is built by histidine 84, histidine 86, glutamate 90, and histidine 129. The Ni(2+) site is built by histidine 84, histidine 86, glutamate 90, and histidine 129.

Belongs to the acireductone dioxygenase (ARD) family. Requires Fe(2+) as cofactor. The cofactor is Ni(2+).

It localises to the cytoplasm. It is found in the nucleus. It catalyses the reaction 1,2-dihydroxy-5-(methylsulfanyl)pent-1-en-3-one + O2 = 4-methylsulfanyl-2-oxobutanoate + formate + 2 H(+). The catalysed reaction is 1,2-dihydroxy-5-(methylsulfanyl)pent-1-en-3-one + O2 = 3-(methylsulfanyl)propanoate + CO + formate + 2 H(+). It functions in the pathway amino-acid biosynthesis; L-methionine biosynthesis via salvage pathway; L-methionine from S-methyl-5-thio-alpha-D-ribose 1-phosphate: step 5/6. In terms of biological role, catalyzes 2 different reactions between oxygen and the acireductone 1,2-dihydroxy-3-keto-5-methylthiopentene (DHK-MTPene) depending upon the metal bound in the active site. Fe-containing acireductone dioxygenase (Fe-ARD) produces formate and 2-keto-4-methylthiobutyrate (KMTB), the alpha-ketoacid precursor of methionine in the methionine recycle pathway. Ni-containing acireductone dioxygenase (Ni-ARD) produces methylthiopropionate, carbon monoxide and formate, and does not lie on the methionine recycle pathway. In Yarrowia lipolytica (strain CLIB 122 / E 150) (Yeast), this protein is Acireductone dioxygenase.